The following is a 166-amino-acid chain: Large ribosomal subunit protein uL10 (166 aa).

Belongs to the universal ribosomal protein uL10 family. As to quaternary structure, part of the ribosomal stalk of the 50S ribosomal subunit. The N-terminus interacts with L11 and the large rRNA to form the base of the stalk. The C-terminus forms an elongated spine to which L12 dimers bind in a sequential fashion forming a multimeric L10(L12)X complex.

In terms of biological role, forms part of the ribosomal stalk, playing a central role in the interaction of the ribosome with GTP-bound translation factors. The protein is Large ribosomal subunit protein uL10 of Pseudomonas fluorescens (strain Pf0-1).